Here is a 124-residue protein sequence, read N- to C-terminus: Ribulose bisphosphate carboxylase small subunit (124 aa).

The protein belongs to the RuBisCO small chain family. Heterohexadecamer of 8 large and 8 small subunits.

RuBisCO catalyzes two reactions: the carboxylation of D-ribulose 1,5-bisphosphate, the primary event in carbon dioxide fixation, as well as the oxidative fragmentation of the pentose substrate. Both reactions occur simultaneously and in competition at the same active site. Although the small subunit is not catalytic it is essential for maximal activity. This is Ribulose bisphosphate carboxylase small subunit from Hydrogenophilus thermoluteolus (Pseudomonas hydrogenothermophila).